We begin with the raw amino-acid sequence, 159 residues long: Small ribosomal subunit protein uS9 (159 aa).

This sequence belongs to the universal ribosomal protein uS9 family.

In Rickettsia africae (strain ESF-5), this protein is Small ribosomal subunit protein uS9.